Consider the following 113-residue polypeptide: Large ribosomal subunit protein bL19 (113 aa).

Belongs to the bacterial ribosomal protein bL19 family.

Its function is as follows. This protein is located at the 30S-50S ribosomal subunit interface and may play a role in the structure and function of the aminoacyl-tRNA binding site. In Mycobacterium bovis (strain ATCC BAA-935 / AF2122/97), this protein is Large ribosomal subunit protein bL19 (rplS).